The following is a 36-amino-acid chain: Photosystem I reaction center subunit VIII (36 aa).

A helical transmembrane segment spans residues 9–29 (ILVPLVGLIFPALSMALLFIY).

Belongs to the PsaI family.

The protein resides in the plastid. It localises to the chloroplast thylakoid membrane. Its function is as follows. May help in the organization of the PsaL subunit. In Pyropia yezoensis (Susabi-nori), this protein is Photosystem I reaction center subunit VIII.